A 174-amino-acid chain; its full sequence is NADH-ubiquinone oxidoreductase chain 6 (174 aa).

4 helical membrane-spanning segments follow: residues Leu24–Met44, Ile53–Ala73, Ile82–Leu102, and Phe143–Thr163.

This sequence belongs to the complex I subunit 6 family.

It localises to the mitochondrion membrane. The catalysed reaction is a ubiquinone + NADH + 5 H(+)(in) = a ubiquinol + NAD(+) + 4 H(+)(out). In terms of biological role, core subunit of the mitochondrial membrane respiratory chain NADH dehydrogenase (Complex I) that is believed to belong to the minimal assembly required for catalysis. Complex I functions in the transfer of electrons from NADH to the respiratory chain. The immediate electron acceptor for the enzyme is believed to be ubiquinone. This Drosophila yakuba (Fruit fly) protein is NADH-ubiquinone oxidoreductase chain 6 (mt:ND6).